The chain runs to 521 residues: NAD(P)H-quinone oxidoreductase subunit 2 (521 aa).

14 helical membrane passes run 15–35, 42–62, 79–99, 109–126, 131–153, 167–187, 208–228, 242–262, 276–296, 304–324, 332–352, 376–396, 398–418, and 464–484; these read ILPE…DITF, WTPY…YTQW, LSIV…LMSV, IGEF…AMFL, ELVM…TGYM, LLIG…LYGL, LALV…IAAV, PTPV…ALAI, WQFI…VVAI, MLAY…VIGT, VFYL…VILF, LALS…GFFG, LYLF…LGLI, and VGLV…NPLL.

This sequence belongs to the complex I subunit 2 family. As to quaternary structure, NDH-1 can be composed of about 15 different subunits; different subcomplexes with different compositions have been identified which probably have different functions.

The protein resides in the cellular thylakoid membrane. The enzyme catalyses a plastoquinone + NADH + (n+1) H(+)(in) = a plastoquinol + NAD(+) + n H(+)(out). The catalysed reaction is a plastoquinone + NADPH + (n+1) H(+)(in) = a plastoquinol + NADP(+) + n H(+)(out). Its function is as follows. NDH-1 shuttles electrons from an unknown electron donor, via FMN and iron-sulfur (Fe-S) centers, to quinones in the respiratory and/or the photosynthetic chain. The immediate electron acceptor for the enzyme in this species is believed to be plastoquinone. Couples the redox reaction to proton translocation, and thus conserves the redox energy in a proton gradient. Cyanobacterial NDH-1 also plays a role in inorganic carbon-concentration. This chain is NAD(P)H-quinone oxidoreductase subunit 2, found in Acaryochloris marina (strain MBIC 11017).